The sequence spans 2148 residues: Polyketide synthase 1 (2148 aa).

The interval 19 to 261 is N-terminal acylcarrier protein transacylase domain (SAT); that stretch reads FIFGDQSSCN…TPLAVHAPYH (243 aa). The 436-residue stretch at 394–829 folds into the Ketosynthase family 3 (KS3) domain; that stretch reads ESKIAIIGMS…GGNTALLVED (436 aa). Active-site for beta-ketoacyl synthase activity residues include Cys-566, His-701, and His-745. Residues 930-1236 form a malonyl-CoA:ACP transacylase (MAT) domain region; the sequence is FVFSGQGSQY…MRNKDGWQVL (307 aa). The active-site For acyl/malonyl transferase activity is Ser-1018. Residues 1310–1624 form a product template (PT) domain region; that stretch reads TASVHRMVHE…RKVLNTAMPP (315 aa). The N-terminal hotdog fold stretch occupies residues 1314–1447; the sequence is HRMVHESVEK…SSLHFEQPKV (134 aa). The PKS/mFAS DH domain occupies 1314-1619; that stretch reads HRMVHESVEK…FQGIPRKVLN (306 aa). The active-site Proton acceptor; for dehydratase activity is His-1346. Positions 1474-1619 are C-terminal hotdog fold; sequence LNSRMSSGVI…FQGIPRKVLN (146 aa). Asp-1533 functions as the Proton donor; for dehydratase activity in the catalytic mechanism. Positions 1619–1655 are disordered; that stretch reads NTAMPPPKSQNEAPVRSGPAKPAAKPPRSASSEHSGH. The segment covering 1634–1650 has biased composition (low complexity); the sequence is RSGPAKPAAKPPRSASS. In terms of domain architecture, Carrier 1 spans 1678-1752; sequence RNPMLPVFKI…DLAAQLGLDT (75 aa). At Ser-1712 the chain carries O-(pantetheine 4'-phosphoryl)serine. Low complexity predominate over residues 1755–1790; sequence SDQSSGQSSSSGGLSPRSDSIGEITSSVTTPPSLSP. The interval 1755–1796 is disordered; it reads SDQSSGQSSSSGGLSPRSDSIGEITSSVTTPPSLSPRGSVSG. In terms of domain architecture, Carrier 2 spans 1793–1870; it reads SVSGSQCKDV…SFKHMFQQGH (78 aa). Ser-1830 is modified (O-(pantetheine 4'-phosphoryl)serine). The thioesterase (TE) domain stretch occupies residues 1882-2146; it reads LKQYRATSTL…ERVAAFIRST (265 aa). Ser-1973 serves as the catalytic For thioesterase activity.

It functions in the pathway pigment biosynthesis. In terms of biological role, polyketide synthase; part of the Pks1 gene cluster that mediates the biosynthesis of an anthraquinone derivative pigment that contributes to conidial pigmentation that provides protection from UV radiation, heat and cold stress. The polyketide synthase Pks1 produces 1-acetyl-2,4,6,8-tetrahydroxy-9,10-anthraquinone though condensation of acetyl-CoA with malonyl-CoA. The dehydratase EthD and the laccase Mlac1 further convert the anthraquinone derivative into the final conidial pigment. The polypeptide is Polyketide synthase 1 (Metarhizium robertsii (strain ARSEF 23 / ATCC MYA-3075) (Metarhizium anisopliae (strain ARSEF 23))).